Here is a 506-residue protein sequence, read N- to C-terminus: Maturase K (506 aa).

The protein belongs to the intron maturase 2 family. MatK subfamily.

The protein resides in the plastid. The protein localises to the chloroplast. Functionally, usually encoded in the trnK tRNA gene intron. Probably assists in splicing its own and other chloroplast group II introns. This chain is Maturase K, found in Rhododendron tsusiophyllum (Rhododendron).